The sequence spans 402 residues: Multidrug resistance protein MdtH (402 aa).

Residues 1–12 lie on the Cytoplasmic side of the membrane; that stretch reads MSRVSQARNLGK. Residues 13–33 form a helical membrane-spanning segment; sequence YFLLIDNMLVVLGFFVVFPLI. The Periplasmic segment spans residues 34–98; sequence SIRFVDQMGW…GFATMGIAHE (65 aa). Residues 99–116 form a helical membrane-spanning segment; it reads PWLLWFSCFLSGLGGTLF. Topologically, residues 117–138 are cytoplasmic; sequence DPPRSALVVKLIRPEQRGRFFS. The chain crosses the membrane as a helical span at residues 139–159; sequence LLMMQDSAGAVIGALLGSWLL. Residues 160-164 are Periplasmic-facing; that stretch reads QYDFR. Residues 165–185 form a helical membrane-spanning segment; that stretch reads LVCATGAILFILCALFNAWLL. Residues 186–213 lie on the Cytoplasmic side of the membrane; sequence PAWKLSTVRTPVREGMRRVMSDKRFVTY. Residues 214–234 traverse the membrane as a helical segment; that stretch reads VLTLAGYYMLAVQVMLMLPIM. Residues 235 to 243 lie on the Periplasmic side of the membrane; the sequence is VNDIAGSPA. A helical membrane pass occupies residues 244-264; the sequence is AVKWMYAIEACLSLTLLYPIA. The Cytoplasmic portion of the chain corresponds to 265-276; sequence RWSEKRFRLEHR. A helical membrane pass occupies residues 277–297; the sequence is LMAGLLVMSLSMLPIGMVGNL. The Periplasmic segment spans residues 298–299; sequence QQ. The helical transmembrane segment at 300–320 threads the bilayer; sequence LFTLICAFYIGSVIAEPARET. Residues 321 to 339 lie on the Cytoplasmic side of the membrane; the sequence is LSASLADARARGSYMGFSR. The chain crosses the membrane as a helical span at residues 340 to 360; that stretch reads LGLAIGGAIGYIGGGWLFDMG. Over 361–367 the chain is Periplasmic; sequence KALAQPE. Residues 368–388 traverse the membrane as a helical segment; that stretch reads LPWMMLGIIGFITFLALGWQF. Residues 389–402 are Cytoplasmic-facing; sequence SHKRTPRRMLEPGA.

Belongs to the major facilitator superfamily. DHA1 family. MdtH (TC 2.A.1.2.21) subfamily.

It is found in the cell inner membrane. In Salmonella agona (strain SL483), this protein is Multidrug resistance protein MdtH.